The primary structure comprises 259 residues: Glycerol-3-phosphate acyltransferase (259 aa).

7 helical membrane passes run 11–31 (IILA…IIIV), 62–82 (LVVA…AILL), 93–112 (TSYF…PIYY), 124–144 (LGLL…VWFI), 152–172 (VSVA…IPYL), 188–208 (FSVA…HYWF), and 211–231 (IWAS…LILG).

This sequence belongs to the PlsY family. As to quaternary structure, probably interacts with PlsX.

The protein resides in the cell membrane. The catalysed reaction is an acyl phosphate + sn-glycerol 3-phosphate = a 1-acyl-sn-glycero-3-phosphate + phosphate. Its pathway is lipid metabolism; phospholipid metabolism. Its function is as follows. Catalyzes the transfer of an acyl group from acyl-phosphate (acyl-PO(4)) to glycerol-3-phosphate (G3P) to form lysophosphatidic acid (LPA). This enzyme utilizes acyl-phosphate as fatty acyl donor, but not acyl-CoA or acyl-ACP. This is Glycerol-3-phosphate acyltransferase from Mycoplasma capricolum subsp. capricolum (strain California kid / ATCC 27343 / NCTC 10154).